Here is a 344-residue protein sequence, read N- to C-terminus: MLDHVLLLTYCLVSTVVRSQPSADVFRSFAGYIPEDHRVTHHEWQNSGKFQGDIDGVDPNLLKLPEGPVLFNALKNKQLTWEGGVIPYEMDTAFSPNEIKILEKAFDSYRRTTCIRFEKREGQTDYLNIVKGYGCYSQVGRTGGKQEISLGRGCFFHEIIVHELMHSVGFWHEHSRADRDDHIKINWDNILPGMKSQFDKISAVLQDLQGENYDYKSIMHYDSTAFSRNGRNTIETVENGFTQVIGTAMDLSPLDIVKINKLYSCKTKKKEKVKPATTEEPHQLIPQVVDKNSVDSGEKCVDHFADCPHFAQYCTRASFFFVMKSYCPFTCKHCPGDRKLKKSG.

A signal peptide spans 1-19; the sequence is MLDHVLLLTYCLVSTVVRS. The Peptidase M12A domain maps to 72–266; it reads NALKNKQLTW…VKINKLYSCK (195 aa). 5 cysteine pairs are disulfide-bonded: C114-C265, C135-C154, C300-C334, C307-C327, and C314-C331. A Zn(2+)-binding site is contributed by H162. E163 is an active-site residue. H166 and H172 together coordinate Zn(2+). The region spanning 300-334 is the ShKT domain; the sequence is CVDHFADCPHFAQYCTRASFFFVMKSYCPFTCKHC.

Zn(2+) is required as a cofactor. Expressed in pharyngeal and body wall muscles, intestine, hypodermis and pharyngeal mc2 cells.

The protein resides in the secreted. Its function is as follows. Metalloprotease. This chain is Zinc metalloproteinase nas-6 (nas-6), found in Caenorhabditis elegans.